The primary structure comprises 362 residues: 2-oxoglutarate-dependent dioxygenase lolO2 (362 aa).

A Fe2OG dioxygenase domain is found at 199 to 312; the sequence is TWNYFLGQPV…RYSLVFFGHL (114 aa). Fe cation contacts are provided by histidine 222, aspartate 224, and histidine 280. Residue arginine 303 participates in 2-oxoglutarate binding.

Belongs to the iron/ascorbate-dependent oxidoreductase family. It depends on Fe(2+) as a cofactor.

The protein operates within alkaloid biosynthesis. Its function is as follows. 2-oxoglutarate-dependent dioxygenase; part of the gene cluster that mediates the biosynthesis of loline alkaloids, potent insecticidal agents composed of a pyrrolizidine ring system and an uncommon ether bridge linking carbons 2 and 7. Lolines are structurally differentiated by the various modifications of the L-amino group and include norloline, loline, N-methylloline, N-acetylloline, N-acetylnorloline, and N-formylloline. The first committed step is the condensation of O-acetyl-L-homoserine (derived from L-aspartic acid) and L-proline, probably catalyzed by the gamma-type pyridoxal 5'-phosphate(PLP)-dependent enzyme lolC, to give the diamino diacid, NACPP. Ensuing cyclization, decarboxylation, and acetylation steps yield 1-exo-acetamidopyrrolizidine (AcAP). LolO is required for installation of the ether bridge upon the pathway intermediate, 1-exo-acetamidopyrrolizidine (AcAP). In sequential 2-oxoglutarate- and O(2)-consuming steps, lolO removes hydrogens from C2 and C7 of AcAP to form both carbon-oxygen bonds in N-acetylnorloline (NANL), the precursor to all other lolines. The enzymes lolD, lolE, lolF and lolT have also been proposed to be involved in the ether-bridge installation. Further processing of the exocyclic moiety of NANL by fungal N-acetamidase (LolN), methyltransferase (LolM), and cytochrome P450 (LolP) enzymes, with occasional involvement of a plant acetyltransferase, generates the other known lolines. LolN transforms NANL to norlonine which is monomethylated and dimethylated to respectively lonine and N-methyllonine (NML) by lolM. LolP catalyzes hydroxylation of the methyl group in N-methylloline (NML) and further oxygenation to N-formylloline (NFL). A plant acetyltransferase is responsible for the acetylation of loline to form N-acetylloline (NAL). LolA might interact with aspartate kinase to prevent feedback inhibition of its activity by these end products and thereby promote production of L-homoserine from L-aspartate. The chain is 2-oxoglutarate-dependent dioxygenase lolO2 from Epichloe uncinata (Endophyte fungus).